The following is a 793-amino-acid chain: Plakophilin-3 (793 aa).

Positions Gln-56–Ala-82 are disordered. The segment covering Pro-66–Ala-82 has biased composition (low complexity). Arg-81 is subject to Omega-N-methylarginine. Residues Ser-122, Ser-179, and Ser-182 each carry the phosphoserine modification. Position 194 is a phosphotyrosine (Tyr-194). Residues Ser-221 to Arg-240 are disordered. At Ser-239 the chain carries Phosphoserine. Position 249 is a phosphothreonine (Thr-249). The residue at position 260 (Arg-260) is an Omega-N-methylarginine. A phosphoserine mark is found at Ser-282, Ser-310, Ser-311, and Ser-328. The required for interaction with SFN stretch occupies residues Ser-282–Leu-285. The required for interaction with GSK3B stretch occupies residues Leu-291 to Val-720. ARM repeat units follow at residues Gly-302–Tyr-345, Ala-348–Tyr-387, Ala-390–Ser-429, Thr-446–Ser-484, Ala-488–Tyr-533, Pro-592–Ala-633, Val-641–Arg-680, and Lys-685–Val-726. Residues Val-513 to Pro-793 are required for binding to PKP2 mRNA.

Belongs to the beta-catenin family. As to quaternary structure, found in a complex composed of CDH1, RAP1A and PKP3; PKP3 acts as a scaffold protein within the complex, the complex is required for CDH1 localization to mature desmosome cell junctions. Interacts with FXR1; the interaction facilitates the binding of PKP3 to PKP2 mRNA. Interacts (via ARM repeats) with GSK3B; the interaction may be involved in PKP3 protein degradation. Interacts with hyperphosphorylated and hypophosphorylated RB1; the interaction inhibits RB1 interaction with and repression of the transcription factor E2F1, potentially via sequestering RB1 to the cytoplasm. Interacts with CDKN1A; the interaction sequesters CDKN1A to the cytoplasm thereby repressing its role as an inhibitor of CDK4- and CDK6-driven RB1 phosphorylation. Interacts (via N-terminus) with SFN; the interaction maintains the cytoplasmic pool of PKP3, facilitates PKP3 exchange at desmosomes and restricts PKP3 localization to existing desmosome cell junctions. Interacts (via N-terminus) with SFN; the interaction maintains the cytoplasmic pool of PKP3 and restricts PKP3 localization to existing desmosome cell junctions. Interacts (via N-terminus) with JUP; the interaction is required for PKP3 localization to desmosome cell-cell junctions. Post-translationally, phosphorylated at Ser-282 when localized to the cytoplasm, PKP3 at desmosome cell junctions is not phosphorylated. Phosphorylation at Try-194 by SRC is induced by reactive oxygen species and potentially acts as a release mechanism from desmosome cell-cell junctions.

It is found in the nucleus. The protein resides in the cell junction. It localises to the desmosome. Its subcellular location is the cytoplasm. The protein localises to the cell membrane. It is found in the adherens junction. Its function is as follows. A component of desmosome cell-cell junctions which are required for positive regulation of cellular adhesion. Required for the localization of DSG2, DSP and PKP2 to mature desmosome junctions. May also play a role in the maintenance of DSG3 protein abundance in keratinocytes. Required for the formation of DSP-containing desmosome precursors in the cytoplasm during desmosome assembly. Also regulates the accumulation of CDH1 to mature desmosome junctions, via cAMP-dependent signaling and its interaction with activated RAP1A. Positively regulates the stabilization of PKP2 mRNA and therefore protein abundance, via its interaction with FXR1, may also regulate the protein abundance of DSP via the same mechanism. May also regulate the protein abundance of the desmosome component PKP1. Required for the organization of desmosome junctions at intercellular borders between basal keratinocytes of the epidermis, as a result plays a role in maintenance of the dermal barrier and regulation of the dermal inflammatory response. Required during epidermal keratinocyte differentiation for cell adherence at tricellular cell-cell contacts, via regulation of the timely formation of adherens junctions and desmosomes in a calcium-dependent manner, and may also play a role in the organization of the intracellular actin fiber belt. Acts as a negative regulator of the inflammatory response in hematopoietic cells of the skin and intestine, via modulation of proinflammatory cytokine production. Important for epithelial barrier maintenance in the intestine to reduce intestinal permeability, thereby plays a role in protection from intestinal-derived endotoxemia. Required for the development of hair follicles, via a role in the regulation of inner root sheaf length, correct alignment and anterior-posterior polarity of hair follicles. Promotes proliferation and cell-cycle G1/S phase transition of keratinocytes. Promotes E2F1-driven transcription of G1/S phase promoting genes by acting to release E2F1 from its inhibitory interaction with RB1, via sequestering RB1 and CDKN1A to the cytoplasm and thereby increasing CDK4- and CDK6-driven phosphorylation of RB1. May act as a scaffold protein to facilitate MAPK phosphorylation of RPS6KA protein family members and subsequently promote downstream EGFR signaling. May play a role in the positive regulation of transcription of Wnt-mediated TCF-responsive target genes. This chain is Plakophilin-3 (PKP3), found in Bos taurus (Bovine).